Consider the following 637-residue polypeptide: Biosynthetic arginine decarboxylase (637 aa).

An N6-(pyridoxal phosphate)lysine modification is found at lysine 101. 286–296 is a substrate binding site; it reads VDIGGGLGVDY.

It belongs to the Orn/Lys/Arg decarboxylase class-II family. SpeA subfamily. Mg(2+) serves as cofactor. The cofactor is pyridoxal 5'-phosphate.

It catalyses the reaction L-arginine + H(+) = agmatine + CO2. Its pathway is amine and polyamine biosynthesis; agmatine biosynthesis; agmatine from L-arginine: step 1/1. Its function is as follows. Catalyzes the biosynthesis of agmatine from arginine. The chain is Biosynthetic arginine decarboxylase from Marinobacter nauticus (strain ATCC 700491 / DSM 11845 / VT8) (Marinobacter aquaeolei).